Consider the following 652-residue polypeptide: Phosphomethylpyrimidine synthase (652 aa).

Residues N235, M264, Y293, H329, 349 to 351 (SRG), 390 to 393 (DGMR), and E429 each bind substrate. H433 serves as a coordination point for Zn(2+). Substrate is bound at residue Y456. A Zn(2+)-binding site is contributed by H497. Positions 577, 580, and 585 each coordinate [4Fe-4S] cluster.

It belongs to the ThiC family. Homodimer. It depends on [4Fe-4S] cluster as a cofactor.

It carries out the reaction 5-amino-1-(5-phospho-beta-D-ribosyl)imidazole + S-adenosyl-L-methionine = 4-amino-2-methyl-5-(phosphooxymethyl)pyrimidine + CO + 5'-deoxyadenosine + formate + L-methionine + 3 H(+). It functions in the pathway cofactor biosynthesis; thiamine diphosphate biosynthesis. In terms of biological role, catalyzes the synthesis of the hydroxymethylpyrimidine phosphate (HMP-P) moiety of thiamine from aminoimidazole ribotide (AIR) in a radical S-adenosyl-L-methionine (SAM)-dependent reaction. The polypeptide is Phosphomethylpyrimidine synthase (Shewanella woodyi (strain ATCC 51908 / MS32)).